An 84-amino-acid chain; its full sequence is U8-theraphotoxin-Hhn1a (84 aa).

Positions 1–21 (MKVVLLECLVWMMAMMELVSC) are cleaved as a signal peptide. 5 cysteine pairs are disulfide-bonded: Cys23-Cys35, Cys29-Cys44, Cys34-Cys67, Cys54-Cys75, and Cys69-Cys81.

The protein belongs to the AVIT (prokineticin) family. As to expression, expressed by the venom gland.

The protein resides in the secreted. The chain is U8-theraphotoxin-Hhn1a from Cyriopagopus hainanus (Chinese bird spider).